The primary structure comprises 158 residues: NAD(P)H-quinone oxidoreductase subunit J, chloroplastic (158 aa).

Belongs to the complex I 30 kDa subunit family. As to quaternary structure, NDH is composed of at least 16 different subunits, 5 of which are encoded in the nucleus.

Its subcellular location is the plastid. It localises to the chloroplast thylakoid membrane. It catalyses the reaction a plastoquinone + NADH + (n+1) H(+)(in) = a plastoquinol + NAD(+) + n H(+)(out). The catalysed reaction is a plastoquinone + NADPH + (n+1) H(+)(in) = a plastoquinol + NADP(+) + n H(+)(out). Its function is as follows. NDH shuttles electrons from NAD(P)H:plastoquinone, via FMN and iron-sulfur (Fe-S) centers, to quinones in the photosynthetic chain and possibly in a chloroplast respiratory chain. The immediate electron acceptor for the enzyme in this species is believed to be plastoquinone. Couples the redox reaction to proton translocation, and thus conserves the redox energy in a proton gradient. This chain is NAD(P)H-quinone oxidoreductase subunit J, chloroplastic, found in Spinacia oleracea (Spinach).